Reading from the N-terminus, the 417-residue chain is Calreticulin (417 aa).

Positions M1–A17 are cleaved as a signal peptide. The tract at residues D18–E197 is N-domain. Q26 contacts Ca(2+). Position 48 is an N6-acetyllysine (K48). Ca(2+) contacts are provided by K62 and K64. K64 is subject to N6-(2-hydroxyisobutyryl)lysine. Y109, K111, Y128, and D135 together coordinate an alpha-D-glucoside. A disulfide bridge links C137 with C163. K159 carries the N6-acetyllysine modification. N179 carries an N-linked (GlcNAc...) asparagine glycan. The 1-1 repeat unit spans residues V191–F202. Residues V191–E255 form a 4 X approximate repeats region. The interval S193–E270 is disordered. The P-domain stretch occupies residues D198 to Y308. Residues K207–E251 show a composition bias toward basic and acidic residues. Position 209 is an N6-acetyllysine (K209). 6 consecutive repeat copies span residues D210–D221, D227–K238, D244–E255, G259–P269, G273–P283, and G287–P297. Residues D237–E270 are interaction with PPIB. Residues D252–W261 are compositionally biased toward acidic residues. The interval G259–P297 is 3 X approximate repeats. The tract at residues E309–L417 is C-domain. D317 lines the an alpha-D-glucoside pocket. D328 is a Ca(2+) binding site. A disordered region spans residues T350–L417. The segment covering A352–E378 has biased composition (basic and acidic residues). The segment covering E379–A408 has biased composition (acidic residues). Positions K414–L417 match the Prevents secretion from ER motif.

This sequence belongs to the calreticulin family. Monomer. Component of an EIF2 complex at least composed of CELF1/CUGBP1, CALR, CALR3, EIF2S1, EIF2S2, HSP90B1 and HSPA5. Interacts with PDIA3/ERp57 and SPACA9. Interacts with TRIM21. Interacts with NR3C1. Interacts with PPIB. Interacts (via P-domain) with PDIA5. Interacts with GABARAP. Interacts with CLCC1.

The protein resides in the endoplasmic reticulum lumen. The protein localises to the cytoplasm. It is found in the cytosol. Its subcellular location is the secreted. It localises to the extracellular space. The protein resides in the extracellular matrix. The protein localises to the cell surface. It is found in the sarcoplasmic reticulum lumen. Its subcellular location is the cytoplasmic vesicle. It localises to the secretory vesicle. The protein resides in the cortical granule. The protein localises to the cytolytic granule. Its function is as follows. Calcium-binding chaperone that promotes folding, oligomeric assembly and quality control in the endoplasmic reticulum (ER) via the calreticulin/calnexin cycle. This lectin interacts transiently with almost all of the monoglucosylated glycoproteins that are synthesized in the ER. Interacts with the DNA-binding domain of NR3C1 and mediates its nuclear export. Involved in maternal gene expression regulation. May participate in oocyte maturation via the regulation of calcium homeostasis. Present in the cortical granules of non-activated oocytes, is exocytosed during the cortical reaction in response to oocyte activation and might participate in the block to polyspermy. This chain is Calreticulin (CALR), found in Bos taurus (Bovine).